A 220-amino-acid chain; its full sequence is U1 small nuclear ribonucleoprotein C (220 aa).

A Matrin-type zinc finger spans residues 4–36 (FFCDYCDVYLTHDSISVRKAHNSGRNHLRNVVD). A disordered region spans residues 197–220 (PLGGFPAGAPLPGAPPGYGPPGAK). A compositionally biased stretch (pro residues) spans 208-220 (PGAPPGYGPPGAK).

This sequence belongs to the U1 small nuclear ribonucleoprotein C family. In terms of assembly, U1 snRNP is composed of the 7 core Sm proteins B/B', D1, D2, D3, E, F and G that assemble in a heptameric protein ring on the Sm site of the small nuclear RNA to form the core snRNP, and at least 3 U1 snRNP-specific proteins U1-70K, U1-A and U1-C. U1-C interacts with U1 snRNA and the 5' splice-site region of the pre-mRNA.

It is found in the nucleus. Functionally, component of the spliceosomal U1 snRNP, which is essential for recognition of the pre-mRNA 5' splice-site and the subsequent assembly of the spliceosome. U1-C is directly involved in initial 5' splice-site recognition for both constitutive and regulated alternative splicing. The interaction with the 5' splice-site seems to precede base-pairing between the pre-mRNA and the U1 snRNA. Stimulates commitment or early (E) complex formation by stabilizing the base pairing of the 5' end of the U1 snRNA and the 5' splice-site region. This chain is U1 small nuclear ribonucleoprotein C, found in Tuber melanosporum (strain Mel28) (Perigord black truffle).